The primary structure comprises 237 residues: Insulin-like growth factor-binding protein 4 (237 aa).

One can recognise an IGFBP N-terminal domain in the interval 2–82 (EAIHCPPCSE…VHGQGVCMEL (81 aa)). Disulfide bonds link Cys-6–Cys-32, Cys-9–Cys-34, Cys-17–Cys-35, Cys-23–Cys-38, Cys-46–Cys-59, and Cys-53–Cys-79. Asn-104 carries an N-linked (GlcNAc...) asparagine glycan. Cystine bridges form between Cys-110–Cys-117, Cys-153–Cys-183, Cys-194–Cys-205, and Cys-207–Cys-228. A Thyroglobulin type-1 domain is found at 150–228 (QGSCQSELHR…GLEPKGELDC (79 aa)). Residue Ser-234 is modified to Phosphoserine.

In terms of assembly, binds IGF2 more than IGF1. In terms of processing, there are two different molecular mass variants (29 kDa and 24 kDa forms). The 29 kDa form was shown to be N-glycosylated. In terms of tissue distribution, detected in adult ewe, liver &gt; kidney &gt; lung &gt;&gt; heart and also in several fetal tissues.

It is found in the secreted. Its function is as follows. IGF-binding proteins prolong the half-life of the IGFs and have been shown to either inhibit or stimulate the growth promoting effects of the IGFs on cell culture. They alter the interaction of IGFs with their cell surface receptors. The chain is Insulin-like growth factor-binding protein 4 (IGFBP4) from Ovis aries (Sheep).